A 344-amino-acid chain; its full sequence is Galactinol synthase 1 (344 aa).

The active site involves K111. Mn(2+) contacts are provided by D127, D129, and H265.

This sequence belongs to the glycosyltransferase 8 family. Galactosyltransferase subfamily. A divalent metal cation serves as cofactor. As to expression, accumulates in mature seeds. Expressed in seedlings (axes and cotyledons), meristems, vascular tissues and emerging lateral roots. Present in abscission zones.

The protein resides in the cytoplasm. It catalyses the reaction myo-inositol + UDP-alpha-D-galactose = alpha-D-galactosyl-(1-&gt;3)-1D-myo-inositol + UDP + H(+). Galactinol synthase involved in the biosynthesis of raffinose family oligosaccharides (RFOs) that function as osmoprotectants. Promotes plant stress tolerance such as heat, chilling, salinity and methylviologen (MV), a superoxide radical generating drug, by mediating raffinose accumulation, an osmoprotective substance. This is Galactinol synthase 1 (GOLS1) from Arabidopsis thaliana (Mouse-ear cress).